The chain runs to 411 residues: Phospholipase A1-II 6 (411 aa).

Ser226 serves as the catalytic Acyl-ester intermediate. Catalysis depends on charge relay system residues Ser226, Asp296, and His334.

It belongs to the AB hydrolase superfamily. Lipase family.

The protein localises to the cytoplasm. Acylhydrolase that catalyzes the hydrolysis of phospholipids at the sn-1 position. This Oryza sativa subsp. japonica (Rice) protein is Phospholipase A1-II 6.